Reading from the N-terminus, the 309-residue chain is tRNA dimethylallyltransferase (309 aa).

Position 13 to 20 (Gly-13 to Thr-20) interacts with ATP. Thr-15–Thr-20 lines the substrate pocket. Interaction with substrate tRNA regions lie at residues Asp-38–Gln-41 and Gln-162–Arg-166.

The protein belongs to the IPP transferase family. As to quaternary structure, monomer. It depends on Mg(2+) as a cofactor.

It catalyses the reaction adenosine(37) in tRNA + dimethylallyl diphosphate = N(6)-dimethylallyladenosine(37) in tRNA + diphosphate. Its function is as follows. Catalyzes the transfer of a dimethylallyl group onto the adenine at position 37 in tRNAs that read codons beginning with uridine, leading to the formation of N6-(dimethylallyl)adenosine (i(6)A). The polypeptide is tRNA dimethylallyltransferase (Nitratidesulfovibrio vulgaris (strain ATCC 29579 / DSM 644 / CCUG 34227 / NCIMB 8303 / VKM B-1760 / Hildenborough) (Desulfovibrio vulgaris)).